A 283-amino-acid chain; its full sequence is Pantothenate synthetase (283 aa).

An ATP-binding site is contributed by 30–37 (MGNLHDGH). Catalysis depends on histidine 37, which acts as the Proton donor. Glutamine 61 lines the (R)-pantoate pocket. Residue glutamine 61 participates in beta-alanine binding. 149–152 (GEKD) contacts ATP. Glutamine 155 is a binding site for (R)-pantoate. 186–189 (LSSR) lines the ATP pocket.

This sequence belongs to the pantothenate synthetase family. In terms of assembly, homodimer.

Its subcellular location is the cytoplasm. It carries out the reaction (R)-pantoate + beta-alanine + ATP = (R)-pantothenate + AMP + diphosphate + H(+). It participates in cofactor biosynthesis; (R)-pantothenate biosynthesis; (R)-pantothenate from (R)-pantoate and beta-alanine: step 1/1. Catalyzes the condensation of pantoate with beta-alanine in an ATP-dependent reaction via a pantoyl-adenylate intermediate. The sequence is that of Pantothenate synthetase from Escherichia coli O45:K1 (strain S88 / ExPEC).